Reading from the N-terminus, the 565-residue chain is Oxygen-dependent choline dehydrogenase (565 aa).

Residue 7-36 (DYIICGAGSAGNVLATRLTEDPGVTVLLLE) participates in FAD binding. The active-site Proton acceptor is the His-474.

This sequence belongs to the GMC oxidoreductase family. It depends on FAD as a cofactor.

It catalyses the reaction choline + A = betaine aldehyde + AH2. The catalysed reaction is betaine aldehyde + NAD(+) + H2O = glycine betaine + NADH + 2 H(+). It participates in amine and polyamine biosynthesis; betaine biosynthesis via choline pathway; betaine aldehyde from choline (cytochrome c reductase route): step 1/1. Functionally, involved in the biosynthesis of the osmoprotectant glycine betaine. Catalyzes the oxidation of choline to betaine aldehyde and betaine aldehyde to glycine betaine at the same rate. The protein is Oxygen-dependent choline dehydrogenase of Burkholderia mallei (strain ATCC 23344).